Here is a 385-residue protein sequence, read N- to C-terminus: Leucine aminopeptidase 1 (385 aa).

Positions Met1–Ala19 are cleaved as a signal peptide. The propeptide occupies Ala20–Val87. The N-linked (GlcNAc...) asparagine glycan is linked to Asn177. 2 residues coordinate Zn(2+): His185 and Asp204. Asn229 is a glycosylation site (N-linked (GlcNAc...) asparagine). Zn(2+)-binding residues include Glu243 and Asp270. Residues Cys319 and Cys323 are joined by a disulfide bond. Position 352 (His352) interacts with Zn(2+).

This sequence belongs to the peptidase M28 family. M28E subfamily. In terms of assembly, monomer. Zn(2+) serves as cofactor.

Its subcellular location is the secreted. Its function is as follows. Extracellular aminopeptidase that allows assimilation of proteinaceous substrates. This chain is Leucine aminopeptidase 1 (LAP1), found in Ajellomyces dermatitidis (strain ER-3 / ATCC MYA-2586) (Blastomyces dermatitidis).